Consider the following 253-residue polypeptide: HTH-type transcriptional repressor DasR (253 aa).

The 71-residue stretch at 16 to 86 (RAQRVPKYYR…QGKGTFVAKP (71 aa)) folds into the HTH gntR-type domain. Positions 46-65 (ERTLAAEFDTSRTTVPQALQ) form a DNA-binding region, H-T-H motif.

It localises to the cytoplasm. In terms of biological role, global regulator that is part of the nutrient-sensing system. In the absence of glucosamine 6-P (GlcN6P), represses the phosphotransferase system (PTS) specific for the uptake of N-acetylglucosamine (PTSNag), and genes involved in the metabolism of chitin, as well as several genes involved in development, thereby linking carbon availability to morphogenesis. Regulates the dasABC transport operon involved in glucose-related morphogenesis. Essential for development. The chain is HTH-type transcriptional repressor DasR (dasR) from Streptomyces griseus.